The sequence spans 327 residues: MSSSMKAPLRNPPRLLAGEGRVHLSASNAHPCFSTSLAAYPLKLLSPTPLPSQPANFAVLYTLAYGGGLVAGDLVSLSVLIDPGCGLVMLTQGTTKVYKRRPGLRPLSHLHTSQPSSDPNLTRQRMHIRLCSSSFLLLLPDSVSPFRSSIYSQTQRFVLPADRTASVLILDWVNSGRGQRPQEGDEEIWSMDSYGSTNEIWVGDERIMRERMVLDNSHFGLNAGGSLSPIANQLSPYNVYATVLIIGPHLTTLFSYLAYLSDHSRQFQLKEPPGLAWSFSEIDDKLQAGVVRIAACEVEDARKWLREVMTAGGVAALVGEGMWPRCI.

Asn-120 carries N-linked (GlcNAc...) asparagine glycosylation. The helical transmembrane segment at Val-239–Tyr-259 threads the bilayer.

This sequence belongs to the UreD family. URE4, URE6 and URE7 may form a complex that acts as a GTP-hydrolysis-dependent molecular chaperone, activating the urease apoprotein URE1.

Its subcellular location is the membrane. Urease accessory protein required for the maturation and activation of urease via the functional incorporation of the urease nickel metallocenter. Plays a role in host brain invasion. The protein is Urease accessory protein 4 of Cryptococcus neoformans var. grubii serotype A (strain H99 / ATCC 208821 / CBS 10515 / FGSC 9487) (Filobasidiella neoformans var. grubii).